A 129-amino-acid polypeptide reads, in one-letter code: Lysozyme C (129 aa).

The C-type lysozyme domain occupies 1–129 (KVYGRCELAA…VNAWTRGCRL (129 aa)). Cystine bridges form between Cys-6-Cys-127, Cys-30-Cys-115, Cys-64-Cys-80, and Cys-76-Cys-94. Active-site residues include Glu-35 and Asp-52.

The protein belongs to the glycosyl hydrolase 22 family. In terms of assembly, monomer.

Its subcellular location is the secreted. The enzyme catalyses Hydrolysis of (1-&gt;4)-beta-linkages between N-acetylmuramic acid and N-acetyl-D-glucosamine residues in a peptidoglycan and between N-acetyl-D-glucosamine residues in chitodextrins.. Lysozymes have primarily a bacteriolytic function; those in tissues and body fluids are associated with the monocyte-macrophage system and enhance the activity of immunoagents. This Chrysolophus amherstiae (Lady Amherst's pheasant) protein is Lysozyme C (LYZ).